We begin with the raw amino-acid sequence, 359 residues long: 3-dehydroquinate synthase (359 aa).

NAD(+) is bound by residues 71–76, 104–108, 128–129, Lys141, Lys150, and 168–171; these read DGEQYK, GVVGD, TT, and TLNT. Zn(2+) is bound by residues Glu183, His247, and His264.

It belongs to the sugar phosphate cyclases superfamily. Dehydroquinate synthase family. The cofactor is Co(2+). Requires Zn(2+) as cofactor. NAD(+) is required as a cofactor.

It is found in the cytoplasm. It carries out the reaction 7-phospho-2-dehydro-3-deoxy-D-arabino-heptonate = 3-dehydroquinate + phosphate. The protein operates within metabolic intermediate biosynthesis; chorismate biosynthesis; chorismate from D-erythrose 4-phosphate and phosphoenolpyruvate: step 2/7. In terms of biological role, catalyzes the conversion of 3-deoxy-D-arabino-heptulosonate 7-phosphate (DAHP) to dehydroquinate (DHQ). This is 3-dehydroquinate synthase from Coxiella burnetii (strain Dugway 5J108-111).